Consider the following 321-residue polypeptide: Serine/threonine-protein phosphatase PP1 (321 aa).

Mn(2+)-binding residues include Asp-60, His-62, Asp-88, and Asn-120. His-121 functions as the Proton donor in the catalytic mechanism. 2 residues coordinate Mn(2+): His-169 and His-244. A disordered region spans residues 298–321 (KKLTNDSNGRPLTPPRNKQQKPKK).

It belongs to the PPP phosphatase family. In terms of assembly, interacts with dpiA. Requires Mn(2+) as cofactor.

It carries out the reaction O-phospho-L-seryl-[protein] + H2O = L-seryl-[protein] + phosphate. The catalysed reaction is O-phospho-L-threonyl-[protein] + H2O = L-threonyl-[protein] + phosphate. Its activity is regulated as follows. Inhibited by okadaic acid, tautomycin and calyculin A. Inhibited by phosphatase inhibitor 2 (dpiA). Its function is as follows. Protein phosphatase activity in vitro. The chain is Serine/threonine-protein phosphatase PP1 (pppB) from Dictyostelium discoideum (Social amoeba).